Consider the following 100-residue polypeptide: NAD(P)H-quinone oxidoreductase subunit 4L, chloroplastic (100 aa).

A run of 3 helical transmembrane segments spans residues 1–21 (MLEH…YGLI), 29–49 (ALMC…TFSN), and 63–83 (IFVT…ALAI).

The protein belongs to the complex I subunit 4L family. NDH is composed of at least 16 different subunits, 5 of which are encoded in the nucleus.

The protein localises to the plastid. It is found in the chloroplast thylakoid membrane. The catalysed reaction is a plastoquinone + NADH + (n+1) H(+)(in) = a plastoquinol + NAD(+) + n H(+)(out). It carries out the reaction a plastoquinone + NADPH + (n+1) H(+)(in) = a plastoquinol + NADP(+) + n H(+)(out). Functionally, NDH shuttles electrons from NAD(P)H:plastoquinone, via FMN and iron-sulfur (Fe-S) centers, to quinones in the photosynthetic chain and possibly in a chloroplast respiratory chain. The immediate electron acceptor for the enzyme in this species is believed to be plastoquinone. Couples the redox reaction to proton translocation, and thus conserves the redox energy in a proton gradient. This is NAD(P)H-quinone oxidoreductase subunit 4L, chloroplastic from Cycas taitungensis (Prince sago).